A 282-amino-acid chain; its full sequence is 2-dehydro-3-deoxyphosphooctonate aldolase (282 aa).

This sequence belongs to the KdsA family.

The protein localises to the cytoplasm. It carries out the reaction D-arabinose 5-phosphate + phosphoenolpyruvate + H2O = 3-deoxy-alpha-D-manno-2-octulosonate-8-phosphate + phosphate. The protein operates within carbohydrate biosynthesis; 3-deoxy-D-manno-octulosonate biosynthesis; 3-deoxy-D-manno-octulosonate from D-ribulose 5-phosphate: step 2/3. Its pathway is bacterial outer membrane biogenesis; lipopolysaccharide biosynthesis. The chain is 2-dehydro-3-deoxyphosphooctonate aldolase from Shewanella amazonensis (strain ATCC BAA-1098 / SB2B).